The chain runs to 554 residues: MDWLQSLLWDPSSVAHIVFLYAFVVAAGVYLGKIKIFGVSLGVTFVLFAGILMGHFGFTADTHILHFIREFGLILFVFCIGLQVGPSFFSSFKKGGMTLNLLAVGIVVLNIAVALGLYYLWNGRVELPMMVGILYGAVTNTPGLGAANEALNQLSYNGPQIALGYACAYPLGVVGIIGSIIAIRYIFRVNMTKEEESLKTQSGDAHHKPHMMSLEVRNESISGKTLIEIKEFLGRNFVCSRIRHEGHVSIPNHETIFNMGDQLFIVCSEEDAPAITVFIGKEVELDWEKQDLPMVSRRILVTKPEINGKTLGSMHFRSMYGVNVTRVNRSGMDLFADPNLILQVGDRVMVVGQQDAVERVAGVLGNQLKRLDTPNIVTIFVGIFLGILLGSLPIAFPGMPTPLKLGLAGGPLVVAILIGRFGHKLHLVTYTTMSANLMLREIGIVLFLASVGIDAGANFVQTVVEGDGLLYVGCGFLITVIPLLIIGAIARLYYKVNYFTLMGLIAGSNTDPPALAYANQVTSSDAPAVGYSTVYPLSMFLRILTGQMILLAMM.

The next 5 helical transmembrane spans lie at 13-31 (SVAH…GVYL), 36-58 (IFGV…HFGF), 73-92 (LILF…FSSF), 99-121 (LNLL…YYLW), and 161-183 (IALG…IIAI). RCK C-terminal domains follow at residues 199–281 (KTQS…FIGK) and 282–366 (EVEL…VLGN). 4 helical membrane-spanning segments follow: residues 376–395 (IVTI…LPIA), 405–422 (LGLA…GRFG), 442–464 (IGIV…QTVV), and 468–490 (GLLY…GAIA).

Belongs to the AAE transporter (TC 2.A.81) family.

It is found in the cell membrane. This is an uncharacterized protein from Bacteroides thetaiotaomicron (strain ATCC 29148 / DSM 2079 / JCM 5827 / CCUG 10774 / NCTC 10582 / VPI-5482 / E50).